The primary structure comprises 88 residues: KTx type I (88 aa).

Residues 1-19 (MKTTLVVVVLACIVALTSA) form the signal peptide. Positions 54 to 88 (CKDVLSEFSCGVLKKDGQCNKADIQAKCKLTCDKC) constitute a ShKT domain. 3 cysteine pairs are disulfide-bonded: Cys-54–Cys-88, Cys-63–Cys-81, and Cys-72–Cys-85.

Belongs to the sea anemone type 1 potassium channel toxin family. As to expression, expressed both outside and in acontia, a specialised envenomation structure laden with batteries of venom-containing nematocysts found only in the superfamily Metridioidea.

The protein resides in the secreted. It localises to the nematocyst. In terms of biological role, inhibits voltage-gated potassium channels (Kv1/KCNA). The polypeptide is KTx type I (Calliactis polypus (Hermit crab anemone)).